A 137-amino-acid chain; its full sequence is Large ribosomal subunit protein uL16 (137 aa).

Belongs to the universal ribosomal protein uL16 family. Part of the 50S ribosomal subunit.

Functionally, binds 23S rRNA and is also seen to make contacts with the A and possibly P site tRNAs. In Pseudomonas entomophila (strain L48), this protein is Large ribosomal subunit protein uL16.